Reading from the N-terminus, the 1495-residue chain is ABC transporter C family member 12 (1495 aa).

A run of 11 helical transmembrane segments spans residues 38–58, 76–96, 110–130, 146–166, 173–195, 303–323, 337–357, 420–440, 441–461, 528–548, and 558–578; these read VMLV…WIIF, VLGL…VMGI, FEVA…VLIG, FGVL…LPLK, ALYL…LIYI, FWLA…GPVI, AWVG…GVLC, GLWS…QQLG, VASL…TLII, FILN…FVLL, and FTSL…PNLL. An ABC transmembrane type-1 1 domain is found at 303–583; that stretch reads FWLAGIFKIG…LPNLLSQVVN (281 aa). The region spanning 615 to 839 is the ABC transporter 1 domain; it reads ISIKNGYFSW…GILFKKLMEN (225 aa). Position 650-657 (650-657) interacts with ATP; it reads GGTGEGKT. 5 consecutive transmembrane segments (helical) span residues 907-927, 949-969, 1042-1062, 1140-1160, and 1166-1186; these read AVGG…TEVL, PGFY…VTFT, FALI…LLIL, LETL…LQNG, and AGFA…TSLL. Residues 914–1198 form the ABC transmembrane type-1 2 domain; sequence VMILLACYLA…VLRQASRAEN (285 aa). Residues 1235-1469 enclose the ABC transporter 2 domain; it reads IKFEDVHLRY…DTSAFFRMVH (235 aa). 1269 to 1276 contributes to the ATP binding site; that stretch reads GRTGAGKS.

The protein belongs to the ABC transporter superfamily. ABCC family. Conjugate transporter (TC 3.A.1.208) subfamily. In terms of tissue distribution, ubiquitous.

The protein localises to the membrane. It carries out the reaction ATP + H2O + xenobioticSide 1 = ADP + phosphate + xenobioticSide 2.. Pump for glutathione S-conjugates. This Arabidopsis thaliana (Mouse-ear cress) protein is ABC transporter C family member 12 (ABCC12).